A 72-amino-acid polypeptide reads, in one-letter code: Mitochondrial import receptor subunit TOM7-1 (72 aa).

Residues 2-41 are Cytoplasmic-facing; the sequence is LKPKGKNTKKAAAADEDDGAVAVVGKFVKEWGTWTAKKAK. The helical transmembrane segment at 42–59 threads the bilayer; the sequence is VITHYGFIPLVIIIGMNS. Over 60-72 the chain is Mitochondrial intermembrane; the sequence is EPKPSLSQLLSPV.

This sequence belongs to the Tom7 family. As to quaternary structure, forms part of the preprotein translocase complex of the outer mitochondrial membrane (TOM complex).

Its subcellular location is the mitochondrion outer membrane. Its function is as follows. Seems to act as a modulator of the dynamics of the mitochondrial protein transport machinery. Seems to promote the dissociation of subunits of the outer membrane translocase. The polypeptide is Mitochondrial import receptor subunit TOM7-1 (TOM7-1) (Solanum tuberosum (Potato)).